The chain runs to 666 residues: Magnesium-chelatase 67 kDa subunit (666 aa).

Residue Gly-37–Thr-44 participates in ATP binding. A disordered region spans residues Leu-327–Gln-367. Residues Gln-335 to Pro-347 show a composition bias toward pro residues. A VWFA domain is found at Leu-475 to Val-661.

The protein belongs to the Mg-chelatase subunits D/I family.

It carries out the reaction protoporphyrin IX + Mg(2+) + ATP + H2O = Mg-protoporphyrin IX + ADP + phosphate + 3 H(+). The protein operates within porphyrin-containing compound metabolism; bacteriochlorophyll biosynthesis. Its function is as follows. Involved in bacteriochlorophyll biosynthesis; introduces a magnesium ion into protoporphyrin IX to yield Mg-protoporphyrin IX. This Heliobacterium mobile (Heliobacillus mobilis) protein is Magnesium-chelatase 67 kDa subunit (bchD).